Consider the following 633-residue polypeptide: Glutamyl-tRNA(Gln) amidotransferase subunit E (633 aa).

The segment at 414–437 is disordered; that stretch reads ALPDGNTEYMRPLPGKARMYPETD.

This sequence belongs to the GatB/GatE family. GatE subfamily. In terms of assembly, heterodimer of GatD and GatE.

It catalyses the reaction L-glutamyl-tRNA(Gln) + L-glutamine + ATP + H2O = L-glutaminyl-tRNA(Gln) + L-glutamate + ADP + phosphate + H(+). In terms of biological role, allows the formation of correctly charged Gln-tRNA(Gln) through the transamidation of misacylated Glu-tRNA(Gln) in organisms which lack glutaminyl-tRNA synthetase. The reaction takes place in the presence of glutamine and ATP through an activated gamma-phospho-Glu-tRNA(Gln). The GatDE system is specific for glutamate and does not act on aspartate. This is Glutamyl-tRNA(Gln) amidotransferase subunit E from Pyrococcus abyssi (strain GE5 / Orsay).